Here is a 219-residue protein sequence, read N- to C-terminus: Elongation factor Ts (219 aa).

Residues threonine 82–valine 85 form an involved in Mg(2+) ion dislocation from EF-Tu region.

The protein belongs to the EF-Ts family.

The protein resides in the cytoplasm. Functionally, associates with the EF-Tu.GDP complex and induces the exchange of GDP to GTP. It remains bound to the aminoacyl-tRNA.EF-Tu.GTP complex up to the GTP hydrolysis stage on the ribosome. The chain is Elongation factor Ts from Gloeobacter violaceus (strain ATCC 29082 / PCC 7421).